Consider the following 105-residue polypeptide: Mitomycin resistance protein McrB (105 aa).

Its function is as follows. Involved in mitomycin resistance. May operate with McrA or may be a type of transcriptional activator protein. The chain is Mitomycin resistance protein McrB (mcrB) from Streptomyces lavendulae.